The primary structure comprises 397 residues: Acetate kinase (397 aa).

Mg(2+) is bound at residue N8. K15 contacts ATP. Residue R90 coordinates substrate. D147 functions as the Proton donor/acceptor in the catalytic mechanism. Residues 207 to 211 (HLGAG), 283 to 285 (DMR), and 330 to 334 (GVGEN) each bind ATP. Position 383 (E383) interacts with Mg(2+).

This sequence belongs to the acetokinase family. In terms of assembly, homodimer. Mg(2+) serves as cofactor. Requires Mn(2+) as cofactor.

The protein localises to the cytoplasm. It catalyses the reaction acetate + ATP = acetyl phosphate + ADP. It participates in metabolic intermediate biosynthesis; acetyl-CoA biosynthesis; acetyl-CoA from acetate: step 1/2. In terms of biological role, catalyzes the formation of acetyl phosphate from acetate and ATP. Can also catalyze the reverse reaction. The polypeptide is Acetate kinase (Fructilactobacillus sanfranciscensis (Lactobacillus sanfranciscensis)).